Reading from the N-terminus, the 313-residue chain is HPr kinase/phosphorylase (313 aa).

Active-site residues include H141 and K162. Residue 156 to 163 participates in ATP binding; the sequence is GKSGIGKS. Residue S163 participates in Mg(2+) binding. D180 functions as the Proton acceptor; for phosphorylation activity. Proton donor; for dephosphorylation activity in the catalytic mechanism. Residues 203–212 are important for the catalytic mechanism of both phosphorylation and dephosphorylation; it reads IEIRGIGIFD. E204 provides a ligand contact to Mg(2+). The active site involves R247. Residues 268–273 are important for the catalytic mechanism of dephosphorylation; sequence PVSAGR.

This sequence belongs to the HPrK/P family. Homohexamer. Requires Mg(2+) as cofactor.

It carries out the reaction [HPr protein]-L-serine + ATP = [HPr protein]-O-phospho-L-serine + ADP + H(+). The catalysed reaction is [HPr protein]-O-phospho-L-serine + phosphate + H(+) = [HPr protein]-L-serine + diphosphate. Catalyzes the ATP- as well as the pyrophosphate-dependent phosphorylation of a specific serine residue in HPr, a phosphocarrier protein of the phosphoenolpyruvate-dependent sugar phosphotransferase system (PTS). HprK/P also catalyzes the pyrophosphate-producing, inorganic phosphate-dependent dephosphorylation (phosphorolysis) of seryl-phosphorylated HPr (P-Ser-HPr). The two antagonistic activities of HprK/P are regulated by several intracellular metabolites, which change their concentration in response to the absence or presence of rapidly metabolisable carbon sources (glucose, fructose, etc.) in the growth medium. Therefore, by controlling the phosphorylation state of HPr, HPrK/P is a sensor enzyme that plays a major role in the regulation of carbon metabolism and sugar transport: it mediates carbon catabolite repression (CCR), and regulates PTS-catalyzed carbohydrate uptake and inducer exclusion. The chain is HPr kinase/phosphorylase from Mycoplasma mycoides subsp. mycoides SC (strain CCUG 32753 / NCTC 10114 / PG1).